Here is a 488-residue protein sequence, read N- to C-terminus: Glutamyl-tRNA(Gln) amidotransferase subunit A (488 aa).

Catalysis depends on charge relay system residues lysine 78 and serine 153. Catalysis depends on serine 177, which acts as the Acyl-ester intermediate.

This sequence belongs to the amidase family. GatA subfamily. Heterotrimer of A, B and C subunits.

It catalyses the reaction L-glutamyl-tRNA(Gln) + L-glutamine + ATP + H2O = L-glutaminyl-tRNA(Gln) + L-glutamate + ADP + phosphate + H(+). Its function is as follows. Allows the formation of correctly charged Gln-tRNA(Gln) through the transamidation of misacylated Glu-tRNA(Gln) in organisms which lack glutaminyl-tRNA synthetase. The reaction takes place in the presence of glutamine and ATP through an activated gamma-phospho-Glu-tRNA(Gln). The sequence is that of Glutamyl-tRNA(Gln) amidotransferase subunit A from Solidesulfovibrio magneticus (strain ATCC 700980 / DSM 13731 / RS-1) (Desulfovibrio magneticus).